The chain runs to 86 residues: Small ribosomal subunit protein bS20 (86 aa).

It belongs to the bacterial ribosomal protein bS20 family.

Binds directly to 16S ribosomal RNA. This is Small ribosomal subunit protein bS20 from Bifidobacterium longum (strain DJO10A).